We begin with the raw amino-acid sequence, 511 residues long: Maturase K (511 aa).

Belongs to the intron maturase 2 family. MatK subfamily.

The protein resides in the plastid. The protein localises to the chloroplast. Functionally, usually encoded in the trnK tRNA gene intron. Probably assists in splicing its own and other chloroplast group II introns. The polypeptide is Maturase K (Nardus stricta (Mat-grass)).